A 244-amino-acid chain; its full sequence is tRNA (guanine-N(1)-)-methyltransferase (244 aa).

S-adenosyl-L-methionine contacts are provided by residues G114 and I134–L139. A disordered region spans residues R220–A244.

It belongs to the RNA methyltransferase TrmD family. Homodimer.

Its subcellular location is the cytoplasm. The catalysed reaction is guanosine(37) in tRNA + S-adenosyl-L-methionine = N(1)-methylguanosine(37) in tRNA + S-adenosyl-L-homocysteine + H(+). In terms of biological role, specifically methylates guanosine-37 in various tRNAs. The sequence is that of tRNA (guanine-N(1)-)-methyltransferase from Rhizobium johnstonii (strain DSM 114642 / LMG 32736 / 3841) (Rhizobium leguminosarum bv. viciae).